We begin with the raw amino-acid sequence, 427 residues long: Endothelin-1 receptor (427 aa).

An N-terminal signal peptide occupies residues 1–20; that stretch reads METFCFRVSFWVALLGCVIS. Over 21–80 the chain is Extracellular; the sequence is DNPESHSTNLSTHVDDFTTFRGTEFSLVVTTHRPTNLALPSNGSMHNYCPQQTKITSAFK. Residues Asn-29 and Asn-62 are each glycosylated (N-linked (GlcNAc...) asparagine). The chain crosses the membrane as a helical span at residues 81–102; that stretch reads YINTVISCTIFIVGMVGNATLL. Residues 103–112 lie on the Cytoplasmic side of the membrane; it reads RIIYQNKCMR. A helical transmembrane segment spans residues 113–132; sequence NGPNALIASLALGDLIYVVI. Topologically, residues 133–159 are extracellular; sequence DLPINVFKLLAGRWPFENHDFGVFLCK. A disulfide bridge links Cys-158 with Cys-239. A helical transmembrane segment spans residues 160-181; it reads LFPFLQKSSVGITVLNLCALSV. Over 182-205 the chain is Cytoplasmic; that stretch reads DRYRAVASWSRVQGIGIPLVTAIE. A helical membrane pass occupies residues 206 to 229; the sequence is IVSIWILSFILAIPEAIGFVMVPF. Topologically, residues 230-256 are extracellular; sequence EYKGEEHKTCMLNATSKFMEFYQDVKD. Residues 257-278 traverse the membrane as a helical segment; that stretch reads WWLFGFYFCMPLVCTAIFYTLM. The Cytoplasmic segment spans residues 279 to 306; sequence TCEMLNRRNGSLRIALSEHLKQRREVAK. The chain crosses the membrane as a helical span at residues 307–328; the sequence is TVFCLVVIFALCWFPLHLSRIL. Topologically, residues 329–347 are extracellular; the sequence is KKTVYDEMDKNRCELLSFL. The helical transmembrane segment at 348–372 threads the bilayer; the sequence is LLMDYIGINLATMNSCINPIALYFV. Over 373-427 the chain is Cytoplasmic; it reads SKKFKNCFQSCLCCCCYQSKSLMTSVPMNGTSIQWKNHEQNNHNTERSSHKDSIN. A Phosphoserine modification is found at Ser-425.

It belongs to the G-protein coupled receptor 1 family. Endothelin receptor subfamily. EDNRA sub-subfamily. As to quaternary structure, interacts with HDAC7 and KAT5.

The protein resides in the cell membrane. Functionally, receptor for endothelin-1. Mediates its action by association with G proteins that activate a phosphatidylinositol-calcium second messenger system. The rank order of binding affinities for ET-A is: ET1 &gt; ET2 &gt;&gt; ET3. The sequence is that of Endothelin-1 receptor from Sus scrofa (Pig).